Consider the following 261-residue polypeptide: Zinc import ATP-binding protein ZnuC (261 aa).

The ABC transporter domain occupies 6-221 (IRLEQVGVTF…PAFVELFGKN (216 aa)). 38-45 (GPNGAGKT) is a binding site for ATP.

This sequence belongs to the ABC transporter superfamily. Zinc importer (TC 3.A.1.15.5) family. The complex is composed of two ATP-binding proteins (ZnuC), two transmembrane proteins (ZnuB) and a solute-binding protein (ZnuA).

It localises to the cell inner membrane. The catalysed reaction is Zn(2+)(out) + ATP(in) + H2O(in) = Zn(2+)(in) + ADP(in) + phosphate(in) + H(+)(in). Functionally, part of the ABC transporter complex ZnuABC involved in zinc import. Responsible for energy coupling to the transport system. The polypeptide is Zinc import ATP-binding protein ZnuC (Pseudomonas fluorescens (strain ATCC BAA-477 / NRRL B-23932 / Pf-5)).